A 353-amino-acid chain; its full sequence is Chorismate synthase (353 aa).

2 residues coordinate NADP(+): R48 and R54. FMN-binding positions include 125-127 (RSS), 238-239 (NA), G278, 293-297 (KPTSS), and R319.

It belongs to the chorismate synthase family. In terms of assembly, homotetramer. FMNH2 is required as a cofactor.

The enzyme catalyses 5-O-(1-carboxyvinyl)-3-phosphoshikimate = chorismate + phosphate. It participates in metabolic intermediate biosynthesis; chorismate biosynthesis; chorismate from D-erythrose 4-phosphate and phosphoenolpyruvate: step 7/7. Catalyzes the anti-1,4-elimination of the C-3 phosphate and the C-6 proR hydrogen from 5-enolpyruvylshikimate-3-phosphate (EPSP) to yield chorismate, which is the branch point compound that serves as the starting substrate for the three terminal pathways of aromatic amino acid biosynthesis. This reaction introduces a second double bond into the aromatic ring system. This is Chorismate synthase from Bordetella parapertussis (strain 12822 / ATCC BAA-587 / NCTC 13253).